The sequence spans 310 residues: MLNVELPGLSLKNPIIPASGCFGFGREFASLYDLSVLGSIMIKATTLEPRFGNPTPRVAETGAGMLNAIGLQNPGLKGVLENELPWLEQFDTPIIANVAGSQVDDYVEVAEQISQAKNVHALELNISCPNVKTGGIAFGTDPQMAAALTKAVKDVSSVPVYVKLSPNVANIVEIAQAIESAGADGLTMINTLIGMRLDLKTGKPILANKTGGLSGPAIKPVAVRMVHEVSQAVSIPIIGMGGVQNAEDVLEFLLAGASAVAVGTANFVNPFICPEIIEELPNVLAAYGYSSVEECIGRSWKHEALAHHRA.

FMN contacts are provided by residues serine 19 and 43–44 (KA). Substrate is bound by residues lysine 43 and 67–71 (NAIGL). FMN is bound by residues asparagine 97 and asparagine 125. Residue asparagine 125 participates in substrate binding. Catalysis depends on cysteine 128, which acts as the Nucleophile. 2 residues coordinate FMN: lysine 163 and isoleucine 189. A substrate-binding site is contributed by 190–191 (NT). FMN contacts are provided by residues glycine 215, 241–242 (GG), and 263–264 (GT).

Belongs to the dihydroorotate dehydrogenase family. Type 1 subfamily. In terms of assembly, heterotetramer of 2 PyrK and 2 PyrD type B subunits. Requires FMN as cofactor.

The protein localises to the cytoplasm. The catalysed reaction is (S)-dihydroorotate + NAD(+) = orotate + NADH + H(+). It functions in the pathway pyrimidine metabolism; UMP biosynthesis via de novo pathway; orotate from (S)-dihydroorotate (NAD(+) route): step 1/1. In terms of biological role, catalyzes the conversion of dihydroorotate to orotate with NAD(+) as electron acceptor. The chain is Dihydroorotate dehydrogenase B (NAD(+)), catalytic subunit (pyrD) from Bacillus pumilus (strain SAFR-032).